The sequence spans 434 residues: Glutamate-1-semialdehyde 2,1-aminomutase 2 (434 aa).

An N6-(pyridoxal phosphate)lysine modification is found at Lys270.

The protein belongs to the class-III pyridoxal-phosphate-dependent aminotransferase family. HemL subfamily. As to quaternary structure, homodimer. Pyridoxal 5'-phosphate serves as cofactor.

The protein localises to the cytoplasm. The enzyme catalyses (S)-4-amino-5-oxopentanoate = 5-aminolevulinate. It participates in porphyrin-containing compound metabolism; protoporphyrin-IX biosynthesis; 5-aminolevulinate from L-glutamyl-tRNA(Glu): step 2/2. This Bacillus cereus (strain G9842) protein is Glutamate-1-semialdehyde 2,1-aminomutase 2.